The chain runs to 204 residues: Dephospho-CoA kinase (204 aa).

Positions 12–204 (RIGVTGGIAS…AWRDQISSIC (193 aa)) constitute a DPCK domain. Residue 20-25 (ASGKSS) coordinates ATP.

The protein belongs to the CoaE family.

It localises to the cytoplasm. It catalyses the reaction 3'-dephospho-CoA + ATP = ADP + CoA + H(+). Its pathway is cofactor biosynthesis; coenzyme A biosynthesis; CoA from (R)-pantothenate: step 5/5. Catalyzes the phosphorylation of the 3'-hydroxyl group of dephosphocoenzyme A to form coenzyme A. The polypeptide is Dephospho-CoA kinase (Prochlorococcus marinus (strain MIT 9313)).